The following is a 405-amino-acid chain: Acetate kinase (405 aa).

N7 contributes to the Mg(2+) binding site. Residue K14 coordinates ATP. R98 contacts substrate. The Proton donor/acceptor role is filled by D155. ATP is bound by residues 214–218 (HLGNG), 289–291 (DLR), and 337–341 (GVGEN). Residue E390 coordinates Mg(2+).

The protein belongs to the acetokinase family. As to quaternary structure, homodimer. Requires Mg(2+) as cofactor. Mn(2+) is required as a cofactor.

It is found in the cytoplasm. It catalyses the reaction acetate + ATP = acetyl phosphate + ADP. It participates in metabolic intermediate biosynthesis; acetyl-CoA biosynthesis; acetyl-CoA from acetate: step 1/2. Its function is as follows. Catalyzes the formation of acetyl phosphate from acetate and ATP. Can also catalyze the reverse reaction. In Gloeothece citriformis (strain PCC 7424) (Cyanothece sp. (strain PCC 7424)), this protein is Acetate kinase.